Reading from the N-terminus, the 179-residue chain is Fas apoptotic inhibitory molecule 1 (179 aa).

The residue at position 2 (Thr2) is an N-acetylthreonine.

This sequence belongs to the FAIM1 family. Widely expressed, with the highest levels in brain, thymus, kidney, and spleen.

It localises to the cytoplasm. Plays a role as an inducible effector molecule that mediates Fas resistance produced by surface Ig engagement in B cells. The polypeptide is Fas apoptotic inhibitory molecule 1 (Faim) (Mus musculus (Mouse)).